Here is an 831-residue protein sequence, read N- to C-terminus: uncharacterized protein (831 aa).

The active-site Tele-phosphohistidine intermediate is the His787.

Belongs to the PEP-utilizing enzyme family.

This is an uncharacterized protein from Bacillus subtilis (strain 168).